The chain runs to 163 residues: Putative ribose 5-phosphate isomerase (163 aa).

16–17 (DD) is a binding site for D-ribulose 5-phosphate. Cys76 serves as the catalytic Proton acceptor. Residues 77–81 (GTGLG), Asn110, Arg120, and Lys148 each bind D-ribulose 5-phosphate.

It belongs to the LacAB/RpiB family. Homodimer or homotetramer.

This Coccidioides immitis (strain RS) (Valley fever fungus) protein is Putative ribose 5-phosphate isomerase.